We begin with the raw amino-acid sequence, 67 residues long: Prokaryotic ubiquitin-like protein Pup (67 aa).

The span at 1-36 (MPQQFEQPQAQQAVTQEDDALATTQAATQTESTDQA) shows a compositional bias: low complexity. Residues 1 to 38 (MPQQFEQPQAQQAVTQEDDALATTQAATQTESTDQADV) are disordered. An ARC ATPase binding region spans residues 23–61 (TTQAATQTESTDQADVLDDILDDIESTLETNAEEYVNSF). E67 participates in a covalent cross-link: Isoglutamyl lysine isopeptide (Glu-Lys) (interchain with K-? in acceptor proteins).

It belongs to the prokaryotic ubiquitin-like protein family. Strongly interacts with the proteasome-associated ATPase ARC through a hydrophobic interface; the interacting region of Pup lies in its C-terminal half. There is one Pup binding site per ARC hexamer ring.

It participates in protein degradation; proteasomal Pup-dependent pathway. Its function is as follows. Protein modifier that is covalently attached to lysine residues of substrate proteins, thereby targeting them for proteasomal degradation. The tagging system is termed pupylation. This Bifidobacterium longum subsp. infantis (strain ATCC 15697 / DSM 20088 / JCM 1222 / NCTC 11817 / S12) protein is Prokaryotic ubiquitin-like protein Pup.